The sequence spans 82 residues: ATP synthase subunit c, chloroplastic (82 aa).

Helical transmembrane passes span 7-27 (AASV…PGIG) and 57-77 (LAFM…LLFA).

The protein belongs to the ATPase C chain family. In terms of assembly, F-type ATPases have 2 components, F(1) - the catalytic core - and F(0) - the membrane proton channel. F(1) has five subunits: alpha(3), beta(3), gamma(1), delta(1), epsilon(1). F(0) has four main subunits: a(1), b(1), b'(1) and c(10-14). The alpha and beta chains form an alternating ring which encloses part of the gamma chain. F(1) is attached to F(0) by a central stalk formed by the gamma and epsilon chains, while a peripheral stalk is formed by the delta, b and b' chains.

Its subcellular location is the plastid. The protein resides in the chloroplast thylakoid membrane. In terms of biological role, f(1)F(0) ATP synthase produces ATP from ADP in the presence of a proton or sodium gradient. F-type ATPases consist of two structural domains, F(1) containing the extramembraneous catalytic core and F(0) containing the membrane proton channel, linked together by a central stalk and a peripheral stalk. During catalysis, ATP synthesis in the catalytic domain of F(1) is coupled via a rotary mechanism of the central stalk subunits to proton translocation. Key component of the F(0) channel; it plays a direct role in translocation across the membrane. A homomeric c-ring of between 10-14 subunits forms the central stalk rotor element with the F(1) delta and epsilon subunits. The protein is ATP synthase subunit c, chloroplastic of Rhodomonas salina (Cryptomonas salina).